The following is a 514-amino-acid chain: Beta-galactoside alpha-2,6-sialyltransferase 2 (514 aa).

The Cytoplasmic portion of the chain corresponds to Met-1–Arg-10. Residues Leu-11–Met-31 form a helical; Signal-anchor for type II membrane protein membrane-spanning segment. Topologically, residues Glu-32–Pro-514 are lumenal. The span at Ala-70–Ser-92 shows a compositional bias: low complexity. A disordered region spans residues Ala-70–Ser-183. The span at Phe-119–Ser-132 shows a compositional bias: polar residues. The span at Pro-145 to Gly-166 shows a compositional bias: acidic residues. 3 cysteine pairs are disulfide-bonded: Cys-246/Cys-512, Cys-289/Cys-441, and Cys-459/Cys-470. Asn-330, Asn-350, and Asn-357 each carry an N-linked (GlcNAc...) asparagine glycan.

The protein belongs to the glycosyltransferase 29 family.

Its subcellular location is the golgi apparatus. The protein localises to the golgi stack membrane. It catalyses the reaction a beta-D-galactoside + CMP-N-acetyl-beta-neuraminate = an N-acetyl-alpha-neuraminyl-(2-&gt;6)-beta-D-galactosyl derivative + CMP + H(+). Functionally, transfers sialic acid from the donor of substrate CMP-sialic acid to galactose containing acceptor substrates. The polypeptide is Beta-galactoside alpha-2,6-sialyltransferase 2 (st6gal2) (Danio rerio (Zebrafish)).